The chain runs to 270 residues: Putative pyruvate, phosphate dikinase regulatory protein 2 (270 aa).

151–158 provides a ligand contact to ADP; it reads GVSRTSKT.

Belongs to the pyruvate, phosphate/water dikinase regulatory protein family. PDRP subfamily.

The enzyme catalyses N(tele)-phospho-L-histidyl/L-threonyl-[pyruvate, phosphate dikinase] + ADP = N(tele)-phospho-L-histidyl/O-phospho-L-threonyl-[pyruvate, phosphate dikinase] + AMP + H(+). It carries out the reaction N(tele)-phospho-L-histidyl/O-phospho-L-threonyl-[pyruvate, phosphate dikinase] + phosphate + H(+) = N(tele)-phospho-L-histidyl/L-threonyl-[pyruvate, phosphate dikinase] + diphosphate. Functionally, bifunctional serine/threonine kinase and phosphorylase involved in the regulation of the pyruvate, phosphate dikinase (PPDK) by catalyzing its phosphorylation/dephosphorylation. The protein is Putative pyruvate, phosphate dikinase regulatory protein 2 of Listeria monocytogenes serovar 1/2a (strain ATCC BAA-679 / EGD-e).